Reading from the N-terminus, the 451-residue chain is MGKYFGTDGVRGEANVELTPELAFKLGRFGGYVLSQHETERPKVFVARDTRISGEMLESALIAGLLSVGIEVYKLGVLATPGVSYLVRTEKASAGVMISASHNPALDNGIKFFGNDGFKLADDQELEIEALLDAPEDTLPRPSAEGLGTLVDYPEGLRKYEKFLVTTGTDLSGMTVALDTANGAASVSARDVFLDLNAEIAVIGEKPNGLNINDGVGSTHPEQLQELVKETGADLGLAFDGDSDRLIAVDETGEIVDGDRIMFIIGKYLSEKGLLAHNTIVTTVMSNLGFHKALDKQGINKAITAVGDRYVVEEMRSSGYNLGGEQSGHVIIMDYNTTGDGQLTAIQLAKVMKETGKSLSELAAEVTIYPQKLVNIRVENSMKDRAMEVPAIANIIAKMEDEMAGNGRILVRPSGTEPLLRVMAEAPTDAEVDYYVDTIADVVRTEIGCDN.

The Phosphoserine intermediate role is filled by serine 101. Mg(2+)-binding residues include serine 101, aspartate 240, aspartate 242, and aspartate 244. Serine 101 is modified (phosphoserine).

The protein belongs to the phosphohexose mutase family. The cofactor is Mg(2+). In terms of processing, activated by phosphorylation.

The enzyme catalyses alpha-D-glucosamine 1-phosphate = D-glucosamine 6-phosphate. Its function is as follows. Catalyzes the conversion of glucosamine-6-phosphate to glucosamine-1-phosphate. The sequence is that of Phosphoglucosamine mutase from Streptococcus pyogenes serotype M2 (strain MGAS10270).